The following is an 86-amino-acid chain: Small ribosomal subunit protein bS20 (86 aa).

The disordered stretch occupies residues 1–23; it reads MANIKSSKKDSIKSRKKKKLNAS.

It belongs to the bacterial ribosomal protein bS20 family.

Binds directly to 16S ribosomal RNA. The sequence is that of Small ribosomal subunit protein bS20 from Buchnera aphidicola subsp. Baizongia pistaciae (strain Bp).